The sequence spans 252 residues: NAD(P)H-quinone oxidoreductase subunit K (252 aa).

Residues Cys-73, Cys-74, Cys-138, and Cys-169 each contribute to the [4Fe-4S] cluster site. Over residues 225–236 the composition is skewed to polar residues; sequence ASTQKQALSPSQ. Residues 225-252 are disordered; that stretch reads ASTQKQALSPSQEIPLEDQNEATKEIAQ.

Belongs to the complex I 20 kDa subunit family. In terms of assembly, NDH-1 can be composed of about 15 different subunits; different subcomplexes with different compositions have been identified which probably have different functions. Requires [4Fe-4S] cluster as cofactor.

The protein localises to the cellular thylakoid membrane. The catalysed reaction is a plastoquinone + NADH + (n+1) H(+)(in) = a plastoquinol + NAD(+) + n H(+)(out). It catalyses the reaction a plastoquinone + NADPH + (n+1) H(+)(in) = a plastoquinol + NADP(+) + n H(+)(out). Its function is as follows. NDH-1 shuttles electrons from an unknown electron donor, via FMN and iron-sulfur (Fe-S) centers, to quinones in the respiratory and/or the photosynthetic chain. The immediate electron acceptor for the enzyme in this species is believed to be plastoquinone. Couples the redox reaction to proton translocation, and thus conserves the redox energy in a proton gradient. Cyanobacterial NDH-1 also plays a role in inorganic carbon-concentration. This Prochlorococcus marinus (strain MIT 9211) protein is NAD(P)H-quinone oxidoreductase subunit K.